Reading from the N-terminus, the 766-residue chain is Pentatricopeptide repeat-containing protein At3g61520, mitochondrial (766 aa).

The transit peptide at methionine 1–valine 30 directs the protein to the mitochondrion. PPR repeat units lie at residues threonine 151–asparagine 181, asparagine 184–phenylalanine 218, asparagine 221–proline 257, asparagine 258–leucine 292, glutamate 293–proline 327, aspartate 328–lysine 358, aspartate 369–proline 404, asparagine 405–proline 439, asparagine 440–glycine 474, asparagine 475–proline 509, aspartate 510–leucine 544, aspartate 545–proline 579, aspartate 580–proline 614, threonine 615–proline 650, asparagine 651–proline 685, and asparagine 686–proline 720.

This sequence belongs to the PPR family. P subfamily.

Its subcellular location is the mitochondrion. This is Pentatricopeptide repeat-containing protein At3g61520, mitochondrial from Arabidopsis thaliana (Mouse-ear cress).